Here is a 523-residue protein sequence, read N- to C-terminus: Cytochrome P450 52A3-B (523 aa).

The helical transmembrane segment at 17-34 threads the bilayer; the sequence is WYTILFGAAFTYFLSIAL. Cys-471 contributes to the heme binding site.

This sequence belongs to the cytochrome P450 family. Requires heme as cofactor.

The protein localises to the membrane. Its function is as follows. Together with an NADPH cytochrome P450 the enzyme system catalyzes the terminal hydroxylation as the first step in the assimilation of alkanes and fatty acids. The sequence is that of Cytochrome P450 52A3-B (CYP52A3-B) from Candida maltosa (Yeast).